Consider the following 226-residue polypeptide: 2-C-methyl-D-erythritol 4-phosphate cytidylyltransferase (226 aa).

It belongs to the IspD/TarI cytidylyltransferase family. IspD subfamily.

The enzyme catalyses 2-C-methyl-D-erythritol 4-phosphate + CTP + H(+) = 4-CDP-2-C-methyl-D-erythritol + diphosphate. The protein operates within isoprenoid biosynthesis; isopentenyl diphosphate biosynthesis via DXP pathway; isopentenyl diphosphate from 1-deoxy-D-xylulose 5-phosphate: step 2/6. Catalyzes the formation of 4-diphosphocytidyl-2-C-methyl-D-erythritol from CTP and 2-C-methyl-D-erythritol 4-phosphate (MEP). This Rhodococcus jostii (strain RHA1) protein is 2-C-methyl-D-erythritol 4-phosphate cytidylyltransferase.